The sequence spans 112 residues: Large ribosomal subunit protein uL18 (112 aa).

This sequence belongs to the universal ribosomal protein uL18 family. Part of the 50S ribosomal subunit; part of the 5S rRNA/L5/L18/L25 subcomplex. Contacts the 5S and 23S rRNAs.

This is one of the proteins that bind and probably mediate the attachment of the 5S RNA into the large ribosomal subunit, where it forms part of the central protuberance. In Thermus thermophilus (strain ATCC BAA-163 / DSM 7039 / HB27), this protein is Large ribosomal subunit protein uL18.